The chain runs to 276 residues: MSKGPAPFLNIGKRAKDLLYKDYNFDQKFSLTTTSNSGLGLTATGVKIDELFIGDIQTQHKSGKTTVDVKIDSESRVSTTVTVDEALTGLKTSFSFRVPDQKSGKLDLQYLHDHFALNSTIGLTSTPLIELAATIGTNELSAGAEVGFDSTSASVTKYNSGICYNKHDFSAAVLLADKGETLKASYIHTFNETNGATVAAEVTHKLKTKENYFTIGSSHAIDSSTLLKTRFSNGGKVGVLCQHEWRPKSTVSISAEYDPKVVSSPSRFGVAIALKP.

Belongs to the eukaryotic mitochondrial porin (TC 1.B.8.1) family.

Its subcellular location is the mitochondrion outer membrane. Forms a channel through the mitochondrial outer membrane that allows diffusion of small hydrophilic molecules. The channel adopts an open conformation at low or zero membrane potential and a closed conformation at potentials above 30-40 mV. The open state has a weak anion selectivity whereas the closed state is cation-selective. The protein is Mitochondrial outer membrane protein porin 6 (VDAC6) of Oryza sativa subsp. japonica (Rice).